A 309-amino-acid polypeptide reads, in one-letter code: MIDILDVKSRATIQDLGRFGLRRFGISHCGAMDKLALRAGNILLGNAENVPAIEVPLGGITLQFQQDMNFCVTGAFYEMMLDDKPVFAYWRYQVRAGQILKMARAKIGMYGYLCVQGGFVLPQALNSCSTDLRAQIGGIEGRCLQAGDQLQTANDHILRSEIGIAPIPLRDVIRALPSSEYQAFKRKSQYYWWRNEWTLQSNSDRMGYRFQGQTLELKQPLEMLSHAIQFGSVQVPPSGQPIILMADAQTTGGYPKIANVIDADLGALAQVRLGSTIKFEAVSLQEAAKLRRKNEIYLDQIRRIVDEKN.

It belongs to the PxpC family. Forms a complex composed of PxpA, PxpB and PxpC.

The catalysed reaction is 5-oxo-L-proline + ATP + 2 H2O = L-glutamate + ADP + phosphate + H(+). Functionally, catalyzes the cleavage of 5-oxoproline to form L-glutamate coupled to the hydrolysis of ATP to ADP and inorganic phosphate. This Haemophilus influenzae (strain ATCC 51907 / DSM 11121 / KW20 / Rd) protein is 5-oxoprolinase subunit C.